Consider the following 669-residue polypeptide: DNA ligase (669 aa).

NAD(+)-binding positions include 35-39 (DSEYD), 84-85 (SL), and E114. The N6-AMP-lysine intermediate role is filled by K116. R137, E171, K287, and K311 together coordinate NAD(+). 4 residues coordinate Zn(2+): C405, C408, C423, and C428. Positions 591–669 (DSDSYFAGKT…EAQLLGELKK (79 aa)) constitute a BRCT domain.

It belongs to the NAD-dependent DNA ligase family. LigA subfamily. The cofactor is Mg(2+). Requires Mn(2+) as cofactor.

It catalyses the reaction NAD(+) + (deoxyribonucleotide)n-3'-hydroxyl + 5'-phospho-(deoxyribonucleotide)m = (deoxyribonucleotide)n+m + AMP + beta-nicotinamide D-nucleotide.. Its function is as follows. DNA ligase that catalyzes the formation of phosphodiester linkages between 5'-phosphoryl and 3'-hydroxyl groups in double-stranded DNA using NAD as a coenzyme and as the energy source for the reaction. It is essential for DNA replication and repair of damaged DNA. The polypeptide is DNA ligase (Bacillus velezensis (strain DSM 23117 / BGSC 10A6 / LMG 26770 / FZB42) (Bacillus amyloliquefaciens subsp. plantarum)).